A 284-amino-acid polypeptide reads, in one-letter code: Bifunctional protein FolD (284 aa).

NADP(+) contacts are provided by residues 165-167 (GRS), Ser190, and Val231.

This sequence belongs to the tetrahydrofolate dehydrogenase/cyclohydrolase family. As to quaternary structure, homodimer.

The catalysed reaction is (6R)-5,10-methylene-5,6,7,8-tetrahydrofolate + NADP(+) = (6R)-5,10-methenyltetrahydrofolate + NADPH. It catalyses the reaction (6R)-5,10-methenyltetrahydrofolate + H2O = (6R)-10-formyltetrahydrofolate + H(+). It functions in the pathway one-carbon metabolism; tetrahydrofolate interconversion. Functionally, catalyzes the oxidation of 5,10-methylenetetrahydrofolate to 5,10-methenyltetrahydrofolate and then the hydrolysis of 5,10-methenyltetrahydrofolate to 10-formyltetrahydrofolate. The chain is Bifunctional protein FolD from Natranaerobius thermophilus (strain ATCC BAA-1301 / DSM 18059 / JW/NM-WN-LF).